Reading from the N-terminus, the 819-residue chain is NEDD4-binding protein 1 (819 aa).

Positions 1-13 (MASGSVQSSSGNG) are enriched in polar residues. The tract at residues 1–20 (MASGSVQSSSGNGRRQAAVV) is disordered. A KH-like domain is found at 80 to 164 (KQAVRRAKEY…VQQFIALFKD (85 aa)). Basic and acidic residues predominate over residues 226–241 (DDKAECKVNQKDEVSR). Disordered regions lie at residues 226 to 247 (DDKA…AGTP) and 666 to 736 (KLDD…MAPR). The region spanning 517–669 (LKHIIIDGSN…LGRYGPKLDD (153 aa)) is the RNase NYN domain. Residues 673–689 (KQPNNRTVHSSFPSSNE) are compositionally biased toward polar residues. The coCUN stretch occupies residues 772-819 (RSPSETMQLKEALLKIFPEADQRHKINEILTAHPFMRDLNALSAMVLD).

This sequence belongs to the N4BP1 family.

It localises to the cytoplasm. It is found in the cytosol. The protein resides in the nucleus. Its subcellular location is the nucleolus. The protein localises to the PML body. Potent suppressor of cytokine production that acts as a regulator of innate immune signaling and inflammation. Acts as a key negative regulator of select cytokine and chemokine responses elicited by TRIF-independent Toll-like receptors (TLRs), thereby limiting inflammatory cytokine responses to minor insults. Has ribonuclease activity. The protein is NEDD4-binding protein 1 of Xenopus tropicalis (Western clawed frog).